Reading from the N-terminus, the 149-residue chain is MRAVVQRVTSSSVQVDGNIVGSIGRGLNVLIGISKSDTLQDLKYIRDKVINLRIFEDEKDKMNLSILDVKGELLVISQFTLYGDCRKGRRPNFMEAKGGEEAEGLYKEFLSLLKESNIKIETGEFGADMKVEINNDGPVTIILDSSKNF.

The Gly-cisPro motif, important for rejection of L-amino acids signature appears at 137-138 (GP).

This sequence belongs to the DTD family. As to quaternary structure, homodimer.

It is found in the cytoplasm. The enzyme catalyses glycyl-tRNA(Ala) + H2O = tRNA(Ala) + glycine + H(+). The catalysed reaction is a D-aminoacyl-tRNA + H2O = a tRNA + a D-alpha-amino acid + H(+). Its function is as follows. An aminoacyl-tRNA editing enzyme that deacylates mischarged D-aminoacyl-tRNAs. Also deacylates mischarged glycyl-tRNA(Ala), protecting cells against glycine mischarging by AlaRS. Acts via tRNA-based rather than protein-based catalysis; rejects L-amino acids rather than detecting D-amino acids in the active site. By recycling D-aminoacyl-tRNA to D-amino acids and free tRNA molecules, this enzyme counteracts the toxicity associated with the formation of D-aminoacyl-tRNA entities in vivo and helps enforce protein L-homochirality. This chain is D-aminoacyl-tRNA deacylase, found in Clostridium botulinum (strain Eklund 17B / Type B).